A 311-amino-acid polypeptide reads, in one-letter code: Probable manganese-dependent inorganic pyrophosphatase (311 aa).

6 residues coordinate Mn(2+): His9, Asp13, Asp15, Asp77, His99, and Asp151.

This sequence belongs to the PPase class C family. Mn(2+) serves as cofactor.

The protein resides in the cytoplasm. It carries out the reaction diphosphate + H2O = 2 phosphate + H(+). This chain is Probable manganese-dependent inorganic pyrophosphatase, found in Streptococcus pyogenes serotype M1.